Reading from the N-terminus, the 401-residue chain is Beta-lactamase (401 aa).

The first 39 residues, 1 to 39, serve as a signal peptide directing secretion; that stretch reads MKLFTSTLTAKKSSTHKPLISLALSVLISTLLISETAQA. Serine 102 acts as the Acyl-ester intermediate in catalysis. Tyrosine 188 functions as the Proton acceptor in the catalytic mechanism. 353–355 provides a ligand contact to substrate; the sequence is KTG.

This sequence belongs to the class-C beta-lactamase family.

The protein resides in the secreted. It catalyses the reaction a beta-lactam + H2O = a substituted beta-amino acid. This protein is a serine beta-lactamase with a substrate specificity for cephalosporins. The protein is Beta-lactamase (ampC) of Psychrobacter immobilis.